Here is a 97-residue protein sequence, read N- to C-terminus: Large ribosomal subunit protein bL28 (97 aa).

The protein belongs to the bacterial ribosomal protein bL28 family.

This chain is Large ribosomal subunit protein bL28, found in Rickettsia typhi (strain ATCC VR-144 / Wilmington).